A 288-amino-acid polypeptide reads, in one-letter code: MALFSKKDKYIRITPNNSLKSSVSRNVPEVPDELFAKCPACKHMIYQKDLGPAKICPTCSYNFRISAQERLTLTVDEGSFQELFTDIETKDPLRFPDYQAKLQKARQATGLHEAVLTGTALVKGQRLALAIMDSHFIMASMGTVVGEKITRLFELAISERLPVVIFTASGGARMQEGIMSLMQMAKVSAAIKKHSNAGLFYLTILTDPTTGGVTASFAMEGDMIIAEPQSLVGFAGRRVIETTVRENLPDDFQKAEFLKEHGFVDAIVKRTDLRDRIAHLVAFHGGVS.

Residues 34–288 (LFAKCPACKH…HLVAFHGGVS (255 aa)) enclose the CoA carboxyltransferase N-terminal domain. Positions 38, 41, 56, and 59 each coordinate Zn(2+). The C4-type zinc-finger motif lies at 38-59 (CPACKHMIYQKDLGPAKICPTC).

This sequence belongs to the AccD/PCCB family. Acetyl-CoA carboxylase is a heterohexamer composed of biotin carboxyl carrier protein (AccB), biotin carboxylase (AccC) and two subunits each of ACCase subunit alpha (AccA) and ACCase subunit beta (AccD). Zn(2+) serves as cofactor.

It is found in the cytoplasm. The catalysed reaction is N(6)-carboxybiotinyl-L-lysyl-[protein] + acetyl-CoA = N(6)-biotinyl-L-lysyl-[protein] + malonyl-CoA. It functions in the pathway lipid metabolism; malonyl-CoA biosynthesis; malonyl-CoA from acetyl-CoA: step 1/1. Functionally, component of the acetyl coenzyme A carboxylase (ACC) complex. Biotin carboxylase (BC) catalyzes the carboxylation of biotin on its carrier protein (BCCP) and then the CO(2) group is transferred by the transcarboxylase to acetyl-CoA to form malonyl-CoA. The sequence is that of Acetyl-coenzyme A carboxylase carboxyl transferase subunit beta from Streptococcus equi subsp. equi (strain 4047).